The primary structure comprises 481 residues: ATP synthase subunit beta, chloroplastic (481 aa).

An ATP-binding site is contributed by Gly-163 to Thr-170.

This sequence belongs to the ATPase alpha/beta chains family. F-type ATPases have 2 components, CF(1) - the catalytic core - and CF(0) - the membrane proton channel. CF(1) has five subunits: alpha(3), beta(3), gamma(1), delta(1), epsilon(1). CF(0) has four main subunits: a(1), b(1), b'(1) and c(9-12).

The protein localises to the plastid. The protein resides in the chloroplast thylakoid membrane. The enzyme catalyses ATP + H2O + 4 H(+)(in) = ADP + phosphate + 5 H(+)(out). Produces ATP from ADP in the presence of a proton gradient across the membrane. The catalytic sites are hosted primarily by the beta subunits. This is ATP synthase subunit beta, chloroplastic from Tupiella akineta (Green alga).